Reading from the N-terminus, the 304-residue chain is Coenzyme PQQ synthesis protein B (304 aa).

This sequence belongs to the PqqB family.

It functions in the pathway cofactor biosynthesis; pyrroloquinoline quinone biosynthesis. May be involved in the transport of PQQ or its precursor to the periplasm. This chain is Coenzyme PQQ synthesis protein B, found in Pseudomonas aeruginosa (strain ATCC 15692 / DSM 22644 / CIP 104116 / JCM 14847 / LMG 12228 / 1C / PRS 101 / PAO1).